The chain runs to 700 residues: Transketolase (700 aa).

T2 carries the post-translational modification N-acetylthreonine. H45 contacts substrate. Thiamine diphosphate-binding positions include T48, H85, 133–135 (GPL), and L135. Residue D177 participates in Mg(2+) binding. Residues G178 and N207 each coordinate thiamine diphosphate. 2 residues coordinate Mg(2+): N207 and I209. Substrate-binding residues include H283, R378, and S405. H283 contacts thiamine diphosphate. The active-site Proton donor is E441. F467 is a thiamine diphosphate binding site. H491, D499, and R552 together coordinate substrate.

It belongs to the transketolase family. Homodimer. Mg(2+) serves as cofactor. It depends on Ca(2+) as a cofactor. The cofactor is Mn(2+). Requires Co(2+) as cofactor. Thiamine diphosphate is required as a cofactor.

The enzyme catalyses D-sedoheptulose 7-phosphate + D-glyceraldehyde 3-phosphate = aldehydo-D-ribose 5-phosphate + D-xylulose 5-phosphate. Its function is as follows. Catalyzes the reversible transfer of a two-carbon ketol group from sedoheptulose-7-phosphate to glyceraldehyde-3-phosphate, producing xylulose-5-phosphate and ribose-5-phosphate. Catalyzes the transfer of a two-carbon ketol group from a ketose donor to an aldose acceptor, via a covalent intermediate with the cofactor thiamine pyrophosphate. The polypeptide is Transketolase (tkt) (Mycobacterium tuberculosis (strain ATCC 25618 / H37Rv)).